The primary structure comprises 119 residues: MARIAGVNLPSNKHVNIALTAIYGIGNTTARKICSDLQIPPFIKLKDLEDIKLDELRESVSKLIVEGDLRREISMNIKRLIDLGSYRGLRHRRGLPVRGQRTKTNARTRKGPRKAIGAK.

Residues 94–113 show a composition bias toward basic residues; sequence GLPVRGQRTKTNARTRKGPR. The segment at 94–119 is disordered; it reads GLPVRGQRTKTNARTRKGPRKAIGAK.

This sequence belongs to the universal ribosomal protein uS13 family. In terms of assembly, part of the 30S ribosomal subunit. Forms a loose heterodimer with protein S19. Forms two bridges to the 50S subunit in the 70S ribosome.

Its function is as follows. Located at the top of the head of the 30S subunit, it contacts several helices of the 16S rRNA. In the 70S ribosome it contacts the 23S rRNA (bridge B1a) and protein L5 of the 50S subunit (bridge B1b), connecting the 2 subunits; these bridges are implicated in subunit movement. Contacts the tRNAs in the A and P-sites. In Nitrosomonas europaea (strain ATCC 19718 / CIP 103999 / KCTC 2705 / NBRC 14298), this protein is Small ribosomal subunit protein uS13.